We begin with the raw amino-acid sequence, 660 residues long: DNA ligase (660 aa).

NAD(+)-binding positions include 33 to 37 (DFVYD), 82 to 83 (SL), and E110. K112 serves as the catalytic N6-AMP-lysine intermediate. 4 residues coordinate NAD(+): R133, E167, K281, and K305. C396, C399, C412, and C417 together coordinate Zn(2+). A BRCT domain is found at 583–660 (DENKLLVGKK…SFEDIKSYLD (78 aa)).

It belongs to the NAD-dependent DNA ligase family. LigA subfamily. It depends on Mg(2+) as a cofactor. Requires Mn(2+) as cofactor.

The catalysed reaction is NAD(+) + (deoxyribonucleotide)n-3'-hydroxyl + 5'-phospho-(deoxyribonucleotide)m = (deoxyribonucleotide)n+m + AMP + beta-nicotinamide D-nucleotide.. Functionally, DNA ligase that catalyzes the formation of phosphodiester linkages between 5'-phosphoryl and 3'-hydroxyl groups in double-stranded DNA using NAD as a coenzyme and as the energy source for the reaction. It is essential for DNA replication and repair of damaged DNA. This is DNA ligase from Borreliella afzelii (strain PKo) (Borrelia afzelii).